A 96-amino-acid polypeptide reads, in one-letter code: Fruit-specific protein (96 aa).

3 disulfides stabilise this stretch: C59/C75, C63/C78, and C69/C92.

Fruit specific.

This is Fruit-specific protein (2A11) from Solanum lycopersicum (Tomato).